A 66-amino-acid polypeptide reads, in one-letter code: Large ribosomal subunit protein uL29 (66 aa).

The protein belongs to the universal ribosomal protein uL29 family.

In Caldanaerobacter subterraneus subsp. tengcongensis (strain DSM 15242 / JCM 11007 / NBRC 100824 / MB4) (Thermoanaerobacter tengcongensis), this protein is Large ribosomal subunit protein uL29.